The chain runs to 246 residues: Small ribosomal subunit protein uS2 (246 aa).

The protein belongs to the universal ribosomal protein uS2 family.

This chain is Small ribosomal subunit protein uS2, found in Burkholderia thailandensis (strain ATCC 700388 / DSM 13276 / CCUG 48851 / CIP 106301 / E264).